Reading from the N-terminus, the 180-residue chain is MQTRLVLLLLALTPLVLAKKFKEEEKPAWAKKDIRDYSEADLERLLDQWEEDEEPLEDDELPEHLRPQPKLDLSNLDSKSPEDLLKVSKKGRTLMTFVSVTGNPTREESDTITKLWQTSLWNNHIQAERYMVDDNRAIFLFKDGTQAWDAKDFLIEQERCKGVTIENKEYPGVNAKKDEL.

Positions 1–18 (MQTRLVLLLLALTPLVLA) are cleaved as a signal peptide. A compositionally biased stretch (acidic residues) spans 48–61 (QWEEDEEPLEDDEL). The tract at residues 48–78 (QWEEDEEPLEDDELPEHLRPQPKLDLSNLDS) is disordered. Residues 93–166 (TLMTFVSVTG…QERCKGVTIE (74 aa)) form a structured core region. A Prevents secretion from ER motif is present at residues 177-180 (KDEL).

Belongs to the MESD family. Monomer. Interacts with Arrow and Yolkless.

The protein resides in the endoplasmic reticulum. In terms of biological role, chaperone specifically assisting the folding of beta-propeller/EGF modules within the family of low-density lipoprotein receptors (LDLRs). Acts as a modulator of the Wg pathway, since some LDLRs are coreceptors for the canonical Wnt pathway. This is LDLR chaperone boca (boca) from Drosophila melanogaster (Fruit fly).